A 377-amino-acid chain; its full sequence is Trichodiene synthase (377 aa).

It belongs to the trichodiene synthase family.

It catalyses the reaction (2E,6E)-farnesyl diphosphate = trichodiene + diphosphate. The protein operates within sesquiterpene biosynthesis; trichothecene biosynthesis. TS is a member of the terpene cyclase group of enzymes. It catalyzes the isomerization and cyclization of farnesyl pyro-phosphate to form trichodiene, the first cyclic intermediate in the biosynthetic pathway for trichothecenes. It serves to branch trichothecene biosynthesis from the isoprenoid pathway. This Fusarium poae protein is Trichodiene synthase (TRI5).